The sequence spans 199 residues: CASP-like protein 2B1 (199 aa).

The Cytoplasmic segment spans residues 1–26 (MSYLGVGLSPVNVAGTKMKLMDRKVR). Residues 27–47 (LTELILRCSVCALALVAAILI) form a helical membrane-spanning segment. Topologically, residues 48–69 (ATDTQVKEIFTIQKKAKYTDMK) are extracellular. Residues 70-90 (ALVFLVVVNGIAAAYSLLHMV) form a helical membrane-spanning segment. At 91 to 106 (RCVVGMMKGSVLFSKP) the chain is on the cytoplasmic side. The helical transmembrane segment at 107-127 (LAWAIFSGDQAIAYLTVAGVA) threads the bilayer. Residues 128-164 (AAAQSAAFAKLGEPELQWMKICTIYGKFCNQVGEGIA) lie on the Extracellular side of the membrane. A helical membrane pass occupies residues 165 to 185 (TALLASIGMVLISSISAFALF). At 186–199 (RLYGGNKAQQGSRW) the chain is on the cytoplasmic side.

The protein belongs to the Casparian strip membrane proteins (CASP) family. In terms of assembly, homodimer and heterodimers.

It is found in the cell membrane. The sequence is that of CASP-like protein 2B1 from Eutrema halophilum (Salt cress).